We begin with the raw amino-acid sequence, 328 residues long: Malate dehydrogenase (328 aa).

NAD(+) is bound at residue 11-17; that stretch reads GAAGQIG. Substrate-binding residues include arginine 94 and arginine 100. Residues asparagine 107, glutamine 114, and 131-133 contribute to the NAD(+) site; that span reads VGN. 2 residues coordinate substrate: asparagine 133 and arginine 164. The active-site Proton acceptor is the histidine 189.

It belongs to the LDH/MDH superfamily. MDH type 2 family.

It carries out the reaction (S)-malate + NAD(+) = oxaloacetate + NADH + H(+). In terms of biological role, catalyzes the reversible oxidation of malate to oxaloacetate. This chain is Malate dehydrogenase, found in Xanthomonas campestris pv. campestris (strain B100).